Consider the following 304-residue polypeptide: N-acetylmuramic acid 6-phosphate etherase (304 aa).

Residues 62 to 225 form the SIS domain; that stretch reads IVQAFQNGGR…TTASMVMIGK (164 aa). Glu-90 serves as the catalytic Proton donor. Glu-121 is a catalytic residue.

Belongs to the GCKR-like family. MurNAc-6-P etherase subfamily. Homodimer.

It carries out the reaction N-acetyl-D-muramate 6-phosphate + H2O = N-acetyl-D-glucosamine 6-phosphate + (R)-lactate. It functions in the pathway amino-sugar metabolism; 1,6-anhydro-N-acetylmuramate degradation. It participates in amino-sugar metabolism; N-acetylmuramate degradation. The protein operates within cell wall biogenesis; peptidoglycan recycling. In terms of biological role, specifically catalyzes the cleavage of the D-lactyl ether substituent of MurNAc 6-phosphate, producing GlcNAc 6-phosphate and D-lactate. Together with AnmK, is also required for the utilization of anhydro-N-acetylmuramic acid (anhMurNAc) either imported from the medium or derived from its own cell wall murein, and thus plays a role in cell wall recycling. This chain is N-acetylmuramic acid 6-phosphate etherase, found in Actinobacillus pleuropneumoniae serotype 7 (strain AP76).